Reading from the N-terminus, the 436-residue chain is MANPVVAIVGRPNVGKSTIFNRIVGERISIVEDVPGVTRDRIYSSAEWLNHSFYLIDTGGIDIGDEPLLVQIRQQAEIAIDEADVIIFMTNGRDGVTAADEEVAKLLRRSNKPVVLAVNKIDNPEMRDLIYDFYALGFGEPYPISGAHGTGLGDLLDAVARHFPKDHGQEYEEDVIKFCLIGRPNVGKSSLVNAILGEERVIVSDIAGTTRDAVDTSFVREGQKYVIIDTAGMRKRGKIYESTEKYSVLRALRAIERSDVVLVVLNAEEGIIEQDKKIAGYAHEAGRGVILVVNKWDAVEKDDKTMVEFERKIRDHFPFLDYAPILFVSAKTKQRLHKLLPLVQLVSDNHAMRVQTNVLNEVIMDAVAMNPTPTHNGRRLKIYYMTQVAVKPPTFVAFVNDPELMHFSYERFLENRIRDAFGFEGTPIKIIARPRK.

EngA-type G domains lie at 4–167 (PVVA…PKDH) and 176–351 (IKFC…DNHA). GTP is bound by residues 10–17 (GRPNVGKS), 57–61 (DTGGI), 119–122 (NKID), 182–189 (GRPNVGKS), 229–233 (DTAGM), and 294–297 (NKWD). The KH-like domain maps to 352–436 (MRVQTNVLNE…PIKIIARPRK (85 aa)).

The protein belongs to the TRAFAC class TrmE-Era-EngA-EngB-Septin-like GTPase superfamily. EngA (Der) GTPase family. In terms of assembly, associates with the 50S ribosomal subunit.

In terms of biological role, GTPase that plays an essential role in the late steps of ribosome biogenesis. The chain is GTPase Der from Geobacillus thermodenitrificans (strain NG80-2).